The chain runs to 108 residues: Thioredoxin (108 aa).

The 107-residue stretch at 2–108 folds into the Thioredoxin domain; it reads NKIIELTDQN…LKDFLDENIK (107 aa). A disulfide bond links C32 and C35.

It belongs to the thioredoxin family.

Its function is as follows. Participates in various redox reactions through the reversible oxidation of its active center dithiol to a disulfide and catalyzes dithiol-disulfide exchange reactions. The protein is Thioredoxin (trxA) of Buchnera aphidicola subsp. Schizaphis graminum (strain Sg).